The chain runs to 360 residues: Endolytic peptidoglycan transglycosylase RlpA (360 aa).

The N-terminal stretch at 1-17 is a signal peptide; it reads MRKEWLWVGIASVLLSA. Cys-18 carries N-palmitoyl cysteine lipidation. Residue Cys-18 is the site of S-diacylglycerol cysteine attachment. Positions 283–359 constitute an SPOR domain; that stretch reads SAISGGYVVQ…AQQQSFIVAA (77 aa).

The protein belongs to the RlpA family.

It is found in the cell membrane. Its function is as follows. Lytic transglycosylase with a strong preference for naked glycan strands that lack stem peptides. The chain is Endolytic peptidoglycan transglycosylase RlpA from Yersinia pestis.